Reading from the N-terminus, the 112-residue chain is Nitrogen regulatory protein P-II 1 (112 aa).

Tyrosine 51 is modified (O-UMP-tyrosine).

Belongs to the P(II) protein family. In terms of assembly, homotrimer. Uridylylated/deuridylylated by GlnD.

P-II indirectly controls the transcription of the glutamine synthetase gene (GlnA). P-II prevents NR-II-catalyzed conversion of NR-I to NR-I-phosphate, the transcriptional activator of GlnA. When P-II is uridylylated to P-II-UMP, these events are reversed. When the ratio of Gln to 2-ketoglutarate decreases, P-II is uridylylated to P-II-UMP, which causes the deadenylation of glutamine synthetase by GlnE, so activating the enzyme. In Escherichia coli O157:H7, this protein is Nitrogen regulatory protein P-II 1 (glnB).